We begin with the raw amino-acid sequence, 82 residues long: Translation initiation factor IF-1, chloroplastic (82 aa).

In terms of domain architecture, S1-like spans 1 to 72; the sequence is MNKQNLIDVE…TKGRIIYRLR (72 aa).

The protein belongs to the IF-1 family. Component of the 30S ribosomal translation pre-initiation complex which assembles on the 30S ribosome in the order IF-2 and IF-3, IF-1 and N-formylmethionyl-tRNA(fMet); mRNA recruitment can occur at any time during PIC assembly.

The protein resides in the plastid. Its subcellular location is the chloroplast. Functionally, one of the essential components for the initiation of protein synthesis. Stabilizes the binding of IF-2 and IF-3 on the 30S subunit to which N-formylmethionyl-tRNA(fMet) subsequently binds. Helps modulate mRNA selection, yielding the 30S pre-initiation complex (PIC). Upon addition of the 50S ribosomal subunit IF-1, IF-2 and IF-3 are released leaving the mature 70S translation initiation complex. The polypeptide is Translation initiation factor IF-1, chloroplastic (Cycas taitungensis (Prince sago)).